The following is a 156-amino-acid chain: Ribosomal RNA large subunit methyltransferase H (156 aa).

Residues L73, G104, and 123-128 (LSSLTL) each bind S-adenosyl-L-methionine.

The protein belongs to the RNA methyltransferase RlmH family. As to quaternary structure, homodimer.

The protein resides in the cytoplasm. The enzyme catalyses pseudouridine(1915) in 23S rRNA + S-adenosyl-L-methionine = N(3)-methylpseudouridine(1915) in 23S rRNA + S-adenosyl-L-homocysteine + H(+). Functionally, specifically methylates the pseudouridine at position 1915 (m3Psi1915) in 23S rRNA. The sequence is that of Ribosomal RNA large subunit methyltransferase H from Bordetella avium (strain 197N).